The following is a 585-amino-acid chain: tRNA-guanine(15) transglycosylase (585 aa).

The active-site Nucleophile is the aspartate 95. Positions 130 and 196 each coordinate substrate. 3 residues coordinate Zn(2+): cysteine 279, cysteine 281, and cysteine 284. The PUA domain occupies 507–582; that stretch reads VMRVVVNKEA…RAVKTRRGVE (76 aa).

This sequence belongs to the archaeosine tRNA-ribosyltransferase family. Zn(2+) serves as cofactor.

It carries out the reaction guanosine(15) in tRNA + 7-cyano-7-deazaguanine = 7-cyano-7-carbaguanosine(15) in tRNA + guanine. It functions in the pathway tRNA modification; archaeosine-tRNA biosynthesis. Functionally, exchanges the guanine residue with 7-cyano-7-deazaguanine (preQ0) at position 15 in the dihydrouridine loop (D-loop) of archaeal tRNAs. The polypeptide is tRNA-guanine(15) transglycosylase (Pyrococcus furiosus (strain ATCC 43587 / DSM 3638 / JCM 8422 / Vc1)).